A 69-amino-acid polypeptide reads, in one-letter code: Putative membrane protein insertion efficiency factor (69 aa).

The protein belongs to the UPF0161 family.

Its subcellular location is the cell membrane. Could be involved in insertion of integral membrane proteins into the membrane. The chain is Putative membrane protein insertion efficiency factor from Clostridium botulinum (strain Okra / Type B1).